Here is a 78-residue protein sequence, read N- to C-terminus: DNA-directed RNA polymerase subunit omega (78 aa).

Belongs to the RNA polymerase subunit omega family. In cyanobacteria the RNAP catalytic core is composed of 2 alpha, 1 beta, 1 beta', 1 gamma and 1 omega subunit. When a sigma factor is associated with the core the holoenzyme is formed, which can initiate transcription.

The enzyme catalyses RNA(n) + a ribonucleoside 5'-triphosphate = RNA(n+1) + diphosphate. Its function is as follows. Promotes RNA polymerase assembly. Latches the N- and C-terminal regions of the beta' subunit thereby facilitating its interaction with the beta and alpha subunits. The sequence is that of DNA-directed RNA polymerase subunit omega from Prochlorococcus marinus (strain MIT 9301).